We begin with the raw amino-acid sequence, 130 residues long: Small ribosomal subunit protein uS8 (130 aa).

This sequence belongs to the universal ribosomal protein uS8 family. In terms of assembly, part of the 30S ribosomal subunit. Contacts proteins S5 and S12.

Functionally, one of the primary rRNA binding proteins, it binds directly to 16S rRNA central domain where it helps coordinate assembly of the platform of the 30S subunit. In Pasteurella multocida (strain Pm70), this protein is Small ribosomal subunit protein uS8.